The primary structure comprises 176 residues: Viral interleukin-10 homolog (176 aa).

The first 25 residues, 1–25 (MLSVMVSSSLVLIVFFLGASEEAKP), serve as a signal peptide directing secretion. Disulfide bonds link C38–C128 and C82–C133. N-linked (GlcNAc...) asparagine; by host glycosylation is present at N152.

The protein belongs to the IL-10 family. As to quaternary structure, homodimer; disulfide-linked.

Its subcellular location is the secreted. Functionally, functional viral IL-10 homolog. Can bind to the human IL-10 receptor and compete with human IL-10 for binding sites. Requires both subunits of the human IL-10 receptor complex to induce signal transduction events and biological activities. IL-10 signaling pathway has several immunosuppressive activities that are exploited by the virus. Inhibits TLR-induced type I interferon production in host plasmacytoid dendritic cells. This chain is Viral interleukin-10 homolog (UL111A), found in Homo sapiens (Human).